A 348-amino-acid chain; its full sequence is Nuclear receptor subfamily 1 group I member 3 (348 aa).

The nuclear receptor DNA-binding region spans 8–83 (LRNCVVCGDQ…AGMRKDMILS (76 aa)). Residues 11–31 (CVVCGDQATGYHFNALTCEGC) form an NR C4-type zinc finger. T38 carries the post-translational modification Phosphothreonine; by PKC. The NR C4-type zinc-finger motif lies at 47–71 (CPFAGSCEVSKTQRRHCPACRLQKC). The NR LBD domain maps to 109 to 348 (EQEELIRTLL…MMPLLQEICS (240 aa)).

It belongs to the nuclear hormone receptor family. NR1 subfamily. Heterodimer of NR1I3 and RXR. Interacts with PSMC4. Interacts with ECT2. Directly interacts with DNAJC7; this complex may also include HSP90. Interacts with CRY1. Interacts with CRY2 in a ligand-dependent manner. Post-translationally, phosphorylated at Thr-38 by PKC, dephosphorylation of Thr-38 is required for nuclear translocation and activation.

Its subcellular location is the nucleus. It is found in the cytoplasm. It localises to the cytoskeleton. Functionally, binds and transactivates the retinoic acid response elements that control expression of the retinoic acid receptor beta 2 and alcohol dehydrogenase 3 genes. Transactivates both the phenobarbital responsive element module of the human CYP2B6 gene and the CYP3A4 xenobiotic response element. This is Nuclear receptor subfamily 1 group I member 3 (NR1I3) from Pan troglodytes (Chimpanzee).